Here is a 123-residue protein sequence, read N- to C-terminus: Small ribosomal subunit protein eS8 (123 aa).

The interval 1 to 38 (MKDQGRSPRKRTGGRRRPNHKKKKHELGKDTVETQVGE) is disordered. Over residues 7 to 26 (SPRKRTGGRRRPNHKKKKHE) the composition is skewed to basic residues.

Part of the 30S ribosomal subunit.

The sequence is that of Small ribosomal subunit protein eS8 (rps8e) from Haloarcula marismortui (strain ATCC 43049 / DSM 3752 / JCM 8966 / VKM B-1809) (Halobacterium marismortui).